Here is a 315-residue protein sequence, read N- to C-terminus: Tubulin beta-1 chain (315 aa).

Residues Ser6, Gly10, Thr11, Gly12, Asn72, and Asn94 each contribute to the GTP site. The interval 295–315 (DATADEEEYYEDEEEEEAQGM) is disordered. Positions 297–315 (TADEEEYYEDEEEEEAQGM) are enriched in acidic residues.

This sequence belongs to the tubulin family. In terms of assembly, dimer of alpha and beta chains. A typical microtubule is a hollow water-filled tube with an outer diameter of 25 nm and an inner diameter of 15 nM. Alpha-beta heterodimers associate head-to-tail to form protofilaments running lengthwise along the microtubule wall with the beta-tubulin subunit facing the microtubule plus end conferring a structural polarity. Microtubules usually have 13 protofilaments but different protofilament numbers can be found in some organisms and specialized cells. The cofactor is Mg(2+).

The protein localises to the cytoplasm. It is found in the cytoskeleton. Tubulin is the major constituent of microtubules, a cylinder consisting of laterally associated linear protofilaments composed of alpha- and beta-tubulin heterodimers. Microtubules grow by the addition of GTP-tubulin dimers to the microtubule end, where a stabilizing cap forms. Below the cap, tubulin dimers are in GDP-bound state, owing to GTPase activity of alpha-tubulin. This is Tubulin beta-1 chain (TUBB1) from Daucus carota (Wild carrot).